Reading from the N-terminus, the 305-residue chain is Ornithine carbamoyltransferase (305 aa).

Residues 52–55 (STRT), Gln79, Arg103, and 130–133 (HPCQ) each bind carbamoyl phosphate. Residues Asn161, Asp221, and 225 to 226 (SM) contribute to the L-ornithine site. Carbamoyl phosphate contacts are provided by residues 261–262 (CL) and Arg289.

This sequence belongs to the aspartate/ornithine carbamoyltransferase superfamily. OTCase family.

The protein resides in the cytoplasm. The enzyme catalyses carbamoyl phosphate + L-ornithine = L-citrulline + phosphate + H(+). It participates in amino-acid biosynthesis; L-arginine biosynthesis; L-arginine from L-ornithine and carbamoyl phosphate: step 1/3. Reversibly catalyzes the transfer of the carbamoyl group from carbamoyl phosphate (CP) to the N(epsilon) atom of ornithine (ORN) to produce L-citrulline. The protein is Ornithine carbamoyltransferase of Methanocorpusculum labreanum (strain ATCC 43576 / DSM 4855 / Z).